A 401-amino-acid chain; its full sequence is MDVKKVVLAYSGGLDTSIILKWLIESYGCEVVAFSADLGQAEELDGLEAKALATGAVKARIVDLREEFVRDFVFPAFRANAIYEGQYLLGTSIARPLIAKAQIRIAEEEDADAVSHGATGKGNDQVRFELTYIALNPAIKIIAPWREWDLKSRSDLVEFARRHGIPIPVTKEKPYSSDRNMLHISYEGGILEDPWLEPDPAMFTLSVAPEEAPDAPEFVEIDFERGNPVAVNGERLSPAQLLTRLNALGGRHGIGRVDLVESRFVGMKSRGVYETPGGTIMRTAHHAVESVTMDRELMFLRDSLVPQYSRLIYNGFWYSPEMRLLQNTMDLAQENVYGTAKLKLYKGNCVVIGRRSDRSLYQPSFATFEEDDVYRQDDATGFIRLHGLRLQIESLVRGKSR.

ATP is bound by residues 9 to 17 (AYSGGLDTS) and Ala-36. Residues Tyr-87 and Ser-92 each contribute to the L-citrulline site. Gly-117 is an ATP binding site. Positions 119, 123, and 124 each coordinate L-aspartate. An L-citrulline-binding site is contributed by Asn-123. Positions 127, 176, 185, 261, and 273 each coordinate L-citrulline.

It belongs to the argininosuccinate synthase family. Type 1 subfamily. As to quaternary structure, homotetramer.

The protein resides in the cytoplasm. It carries out the reaction L-citrulline + L-aspartate + ATP = 2-(N(omega)-L-arginino)succinate + AMP + diphosphate + H(+). It participates in amino-acid biosynthesis; L-arginine biosynthesis; L-arginine from L-ornithine and carbamoyl phosphate: step 2/3. This chain is Argininosuccinate synthase, found in Syntrophobacter fumaroxidans (strain DSM 10017 / MPOB).